The primary structure comprises 201 residues: Retinol binding protein 4 (201 aa).

The N-terminal stretch at 1-18 (MAWVWALVLLAALGSARA) is a signal peptide. Disulfide bonds link cysteine 22–cysteine 178, cysteine 88–cysteine 192, and cysteine 138–cysteine 147. Glutamine 116 contributes to the substrate binding site. The residue at position 139 (arginine 139) is an Omega-N-methylarginine.

Belongs to the calycin superfamily. Lipocalin family. Interacts with TTR. Interaction with TTR prevents its loss by filtration through the kidney glomeruli. Interacts with STRA6. Highly expressed in liver. Also expressed in adipose tissue. Expressed by endometrium from days 16-25 and by unattached chorioallantois from days 30-36 during pregnancy.

The protein resides in the secreted. Functionally, retinol-binding protein that mediates retinol transport in blood plasma. Delivers retinol from the liver stores to the peripheral tissues. Transfers the bound all-trans retinol to STRA6, that then facilitates retinol transport across the cell membrane. This chain is Retinol binding protein 4, found in Felis catus (Cat).